A 336-amino-acid chain; its full sequence is Nitrilase (336 aa).

Residues 5–278 (LKVACVQAAP…EGLLYATLDP (274 aa)) enclose the CN hydrolase domain. Residue Glu45 is the Proton acceptor of the active site. The active-site Proton donor is the Lys127. Catalysis depends on Cys161, which acts as the Nucleophile.

The protein belongs to the carbon-nitrogen hydrolase superfamily. Nitrilase family.

The catalysed reaction is a nitrile + 2 H2O = a carboxylate + NH4(+). The enzyme catalyses (indol-3-yl)acetonitrile + 2 H2O = (indol-3-yl)acetate + NH4(+). It catalyses the reaction phenylpropanonitrile + 2 H2O = 3-phenylpropanoate + NH4(+). Functionally, arylacetonitrilase which is capable of hydrolyzing indole-3-acetonitrile (IAN) to the plant hormone indole-3-acetate (IAA), and allows the plant pathogenic bacterium to use IAN as a sole nitrogen source. Is also able to hydrolyze phenylpropionitrile (PPN), allowing the use of this compound as a sole nitrogen source. This enzyme may represent an additional mechanism for IAA biosynthesis or may be used to degrade and assimilate aldoximes and nitriles produced during host plant secondary metabolism. This chain is Nitrilase, found in Pseudomonas syringae pv. syringae (strain B728a).